Reading from the N-terminus, the 81-residue chain is Exodeoxyribonuclease 7 small subunit (81 aa).

This sequence belongs to the XseB family. Heterooligomer composed of large and small subunits.

The protein localises to the cytoplasm. The enzyme catalyses Exonucleolytic cleavage in either 5'- to 3'- or 3'- to 5'-direction to yield nucleoside 5'-phosphates.. Functionally, bidirectionally degrades single-stranded DNA into large acid-insoluble oligonucleotides, which are then degraded further into small acid-soluble oligonucleotides. The chain is Exodeoxyribonuclease 7 small subunit from Nitratidesulfovibrio vulgaris (strain ATCC 29579 / DSM 644 / CCUG 34227 / NCIMB 8303 / VKM B-1760 / Hildenborough) (Desulfovibrio vulgaris).